Here is a 238-residue protein sequence, read N- to C-terminus: CD63 antigen (238 aa).

Residues 2–11 (AVEGGMKCVK) are Cytoplasmic-facing. The chain crosses the membrane as a helical span at residues 12–32 (FLLYVLLLAFCACAVGLIAIG). Residues 33-51 (VAVQVVLKQAITHETTAGS) are Extracellular-facing. The chain crosses the membrane as a helical span at residues 52–72 (LLPVVIIAVGAFLFLVAFVGC). The Cytoplasmic segment spans residues 73 to 81 (CGACKENYC). Residues 82–102 (LMITFAIFLSLIMLVEVAVAI) form a helical membrane-spanning segment. Residues 103-203 (AGYVFRDQVK…TIAAWLRKNV (101 aa)) lie on the Extracellular side of the membrane. N-linked (GlcNAc...) asparagine glycosylation is found at asparagine 130, asparagine 150, and asparagine 172. A helical transmembrane segment spans residues 204 to 224 (LLVAGAALGIAFVEVLGIIFS). Topologically, residues 225-238 (CCLVKSIRSGYEVM) are cytoplasmic. The Lysosomal targeting motif signature appears at 234–238 (GYEVM).

The protein belongs to the tetraspanin (TM4SF) family. Interacts with TIMP1 and ITGB1 and recruits TIMP1 to ITGB1. Interacts with CD9. Identified in a complex with CD9 and ITGB3. Interacts with PMEL. Interacts with KDR/VEGFR2; identified in a complex with ITGB1 and KDR/VEGFR2 and is required to recruit KDR to ITGB1 complexes. Interacts with SYT7. In terms of processing, palmitoylated at a low, basal level in unstimulated platelets. The level of palmitoylation increases when platelets are activated by thrombin (in vitro). Detected in mast cells and platelets (at protein level).

It is found in the cell membrane. Its subcellular location is the lysosome membrane. The protein localises to the late endosome membrane. The protein resides in the endosome. It localises to the multivesicular body. It is found in the melanosome. Its subcellular location is the secreted. The protein localises to the extracellular exosome. The protein resides in the cell surface. Its function is as follows. Functions as a cell surface receptor for TIMP1 and plays a role in the activation of cellular signaling cascades. Plays a role in the activation of ITGB1 and integrin signaling, leading to the activation of AKT, FAK/PTK2 and MAP kinases. Promotes cell survival, reorganization of the actin cytoskeleton, cell adhesion, spreading and migration, via its role in the activation of AKT and FAK/PTK2. Plays a role in VEGFA signaling via its role in regulating the internalization of KDR/VEGFR2. Plays a role in intracellular vesicular transport processes, and is required for normal trafficking of the PMEL luminal domain that is essential for the development and maturation of melanocytes. Plays a role in the adhesion of leukocytes onto endothelial cells via its role in the regulation of SELP trafficking. May play a role in mast cell degranulation in response to Ms4a2/FceRI stimulation, but not in mast cell degranulation in response to other stimuli. In Rattus norvegicus (Rat), this protein is CD63 antigen (Cd63).